The primary structure comprises 331 residues: Reticulocalbin-1 (331 aa).

The first 29 residues, Met1 to Ala29, serve as a signal peptide directing secretion. Asn53 carries N-linked (GlcNAc...) asparagine glycosylation. Ser55 carries the post-translational modification Phosphoserine. Residue Thr76 is modified to Phosphothreonine. EF-hand domains are found at residues Glu79–Arg114, Tyr115–Gly150, Lys166–Glu201, Met203–Asn238, Trp244–Asp279, and His280–Ser315. Ser80 carries the phosphoserine; by FAM20C modification. Asp92, Asp94, Asp96, Glu103, Asp128, Asp130, Asp132, Lys134, Glu139, Asp179, Asn181, Asp183, Thr185, Glu190, Asp216, Asn218, Asp220, Glu227, Asp257, Asn259, Asp261, Lys263, Glu268, Asp293, Asn295, Asp297, Lys299, and Glu304 together coordinate Ca(2+). The Prevents secretion from ER motif lies at His328–Leu331.

The protein belongs to the CREC family. O-glycosylated. O-mannosylated by POMT1 and POMT2 and elongated by POMGNT1.

The protein localises to the endoplasmic reticulum lumen. Its function is as follows. May regulate calcium-dependent activities in the endoplasmic reticulum lumen or post-ER compartment. The chain is Reticulocalbin-1 (RCN1) from Homo sapiens (Human).